The primary structure comprises 110 residues: Snake venom vascular endothelial growth factor toxin (110 aa).

Q1 is subject to Pyrrolidone carboxylic acid. 3 disulfide bridges follow: C14-C56, C45-C91, and C49-C93.

The protein belongs to the PDGF/VEGF growth factor family. Snake venom VEGF subfamily. In terms of assembly, homodimer; disulfide-linked. In terms of tissue distribution, expressed by the venom gland.

The protein resides in the secreted. In terms of biological role, snake venom VEGFs that may contribute to venom dispersion and prey subjugation by inducing vascular permeability and hypotension. This protein potently stimulates dermal human microvascular endothelial cell (dHMVEC) proliferation in a VEGFR-2 dependent manner. This stimulatory effect is correlated with activation of the MAPK Erk1/2 signaling pathway. It also appears to be a chemoattractant for migration of these cells and stimulates their radial migration in a collagen gel. In vivo, it induces angiogenesis in a Japanese quail assay. This pro-angiogenic effect may also be related to its interaction with VEGFR-2. In addition, it may induce an increase in capillary permeability after intradermal injection, as well as a drastic hypotensive effect after intravenous injection. The hypotension is mediated by nitric oxide (NO), which is produced by VEGF-activated endothelium NO synthase. The polypeptide is Snake venom vascular endothelial growth factor toxin (Daboia palaestinae (Palestine viper)).